Here is a 396-residue protein sequence, read N- to C-terminus: Phosphoglycerate kinase (396 aa).

Residues Asp-21–Asn-23, Arg-36, His-59–Arg-62, Arg-114, and Arg-147 each bind substrate. ATP is bound by residues Lys-197, Glu-319, and Gly-349–Thr-352.

The protein belongs to the phosphoglycerate kinase family. As to quaternary structure, monomer.

The protein resides in the cytoplasm. It carries out the reaction (2R)-3-phosphoglycerate + ATP = (2R)-3-phospho-glyceroyl phosphate + ADP. Its pathway is carbohydrate degradation; glycolysis; pyruvate from D-glyceraldehyde 3-phosphate: step 2/5. The chain is Phosphoglycerate kinase from Jannaschia sp. (strain CCS1).